A 329-amino-acid chain; its full sequence is Galactosylgalactosylxylosylprotein 3-beta-glucuronosyltransferase 2 (329 aa).

Residues 1–2 are Cytoplasmic-facing; it reads MK. Residues 3–23 traverse the membrane as a helical; Signal-anchor for type II membrane protein segment; it reads SALFSRFFILLPWILIVIIML. Residues 24–329 lie on the Lumenal side of the membrane; the sequence is DVDTRRPAPP…YRLDTVKIEV (306 aa). Residues 45–87 form a disordered region; it reads VGRGGARLPPRRGGPDSGPGRGWEKRNESRPHARPRPEPPLPT. The span at 66 to 81 shows a compositional bias: basic and acidic residues; sequence GWEKRNESRPHARPRP. N71 carries an N-linked (GlcNAc...) asparagine glycan. UDP-alpha-D-glucuronate is bound by residues 93–95, D124, R161, R166, and 191–193; these read PTY and DDD. Position 193 (D193) interacts with Mn(2+). Residues 240–249 form an interaction with galactose moiety of substrate glycoprotein region; sequence WRADRPFAID. The active-site Proton donor/acceptor is the E279. N298 carries N-linked (GlcNAc...) asparagine glycosylation. Residue 306–308 coordinates UDP-alpha-D-glucuronate; the sequence is HTR.

Belongs to the glycosyltransferase 43 family. As to quaternary structure, homodimer. It depends on Mn(2+) as a cofactor.

The protein resides in the golgi apparatus membrane. The enzyme catalyses 3-O-(beta-D-galactosyl-(1-&gt;3)-beta-D-galactosyl-(1-&gt;4)-beta-D-xylosyl)-L-seryl-[protein] + UDP-alpha-D-glucuronate = 3-O-(beta-D-GlcA-(1-&gt;3)-beta-D-Gal-(1-&gt;3)-beta-D-Gal-(1-&gt;4)-beta-D-Xyl)-L-seryl-[protein] + UDP + H(+). Its pathway is protein modification; protein glycosylation. Functionally, involved in the biosynthesis of L2/HNK-1 carbohydrate epitope on both glycolipids and glycoproteins. The protein is Galactosylgalactosylxylosylprotein 3-beta-glucuronosyltransferase 2 (B3GAT2) of Canis lupus familiaris (Dog).